The primary structure comprises 222 residues: CEACAM1-like protein UL7 (222 aa).

N-linked (GlcNAc...) asparagine; by host glycosylation is found at Asn50, Asn56, Asn60, Asn71, Asn105, Asn109, Asn125, Asn132, Asn147, Asn164, Asn168, and Asn189. A helical transmembrane segment spans residues 193–213 (LALVGVVVFLVLIVVCIMGWW).

Belongs to the RL11 family. Highly glycosylated.

Its subcellular location is the secreted. It is found in the host cell membrane. Its function is as follows. Plays a role in modulating the host immune response and affecting host cytokine production. Structurally and functionally homolog of host CEACAM1, induces endothelial cell angiogenesis. The protein is CEACAM1-like protein UL7 (UL7) of Homo sapiens (Human).